The chain runs to 491 residues: Hydroxymethylglutaryl-CoA synthase (491 aa).

The active-site Proton donor/acceptor is Glu-127. Residue Cys-159 is the Acyl-thioester intermediate of the active site. Residues Cys-159, Thr-201, and Ser-250 each coordinate (3S)-3-hydroxy-3-methylglutaryl-CoA. Ser-276 carries the post-translational modification Phosphoserine. His-296 serves as the catalytic Proton donor/acceptor. The (3S)-3-hydroxy-3-methylglutaryl-CoA site is built by His-296, Lys-305, Asn-371, and Ser-405.

The protein belongs to the thiolase-like superfamily. HMG-CoA synthase family.

It catalyses the reaction acetoacetyl-CoA + acetyl-CoA + H2O = (3S)-3-hydroxy-3-methylglutaryl-CoA + CoA + H(+). It functions in the pathway metabolic intermediate biosynthesis; (R)-mevalonate biosynthesis; (R)-mevalonate from acetyl-CoA: step 2/3. In terms of biological role, hydroxymethylglutaryl-CoA synthase; part of the first module of ergosterol biosynthesis pathway that includes the early steps of the pathway, conserved across all eukaryotes, and which results in the formation of mevalonate from acetyl-coenzyme A (acetyl-CoA). ERG13 condenses acetyl-CoA with acetoacetyl-CoA to form hydroxymethylglutaryl-CoA (HMG-CoA). The first module starts with the action of the cytosolic acetyl-CoA acetyltransferase ERG10 that catalyzes the formation of acetoacetyl-CoA. The hydroxymethylglutaryl-CoA synthase ERG13 then condenses acetyl-CoA with acetoacetyl-CoA to form HMG-CoA. The rate-limiting step of the early module is the reduction to mevalonate by the 3-hydroxy-3-methylglutaryl-coenzyme A (HMG-CoA) reductases HMG1 and HMG2 which are derived from a single ancestral HMGR gene by gene duplication. This chain is Hydroxymethylglutaryl-CoA synthase, found in Saccharomyces cerevisiae (strain ATCC 204508 / S288c) (Baker's yeast).